We begin with the raw amino-acid sequence, 123 residues long: Putative iron-sulfur cluster insertion protein ErpA (123 aa).

Iron-sulfur cluster is bound by residues C51, C115, and C117.

It belongs to the HesB/IscA family. Homodimer. The cofactor is iron-sulfur cluster.

In terms of biological role, required for insertion of 4Fe-4S clusters. The chain is Putative iron-sulfur cluster insertion protein ErpA from Burkholderia ambifaria (strain ATCC BAA-244 / DSM 16087 / CCUG 44356 / LMG 19182 / AMMD) (Burkholderia cepacia (strain AMMD)).